A 297-amino-acid chain; its full sequence is Mycothiol acetyltransferase (297 aa).

E35 serves as a coordination point for 1D-myo-inositol 2-(L-cysteinylamino)-2-deoxy-alpha-D-glucopyranoside. 73–75 (MLV) contacts acetyl-CoA. Residues 155–297 (LRTFGGTEAE…VAVHAQYGIP (143 aa)) enclose the N-acetyltransferase domain. Residues E181, K222, and E230 each coordinate 1D-myo-inositol 2-(L-cysteinylamino)-2-deoxy-alpha-D-glucopyranoside. Acetyl-CoA contacts are provided by residues 234-236 (LGV) and 241-247 (QGRGLGR). 1D-myo-inositol 2-(L-cysteinylamino)-2-deoxy-alpha-D-glucopyranoside is bound at residue Y268.

The protein belongs to the acetyltransferase family. MshD subfamily. In terms of assembly, monomer.

The enzyme catalyses 1D-myo-inositol 2-(L-cysteinylamino)-2-deoxy-alpha-D-glucopyranoside + acetyl-CoA = mycothiol + CoA + H(+). Functionally, catalyzes the transfer of acetyl from acetyl-CoA to desacetylmycothiol (Cys-GlcN-Ins) to form mycothiol. This chain is Mycothiol acetyltransferase, found in Beutenbergia cavernae (strain ATCC BAA-8 / DSM 12333 / CCUG 43141 / JCM 11478 / NBRC 16432 / NCIMB 13614 / HKI 0122).